The following is a 354-amino-acid chain: Elongation factor Ts (354 aa).

Residues 81-84 (TDFV) form an involved in Mg(2+) ion dislocation from EF-Tu region.

The protein belongs to the EF-Ts family.

The protein resides in the cytoplasm. Functionally, associates with the EF-Tu.GDP complex and induces the exchange of GDP to GTP. It remains bound to the aminoacyl-tRNA.EF-Tu.GTP complex up to the GTP hydrolysis stage on the ribosome. The chain is Elongation factor Ts from Campylobacter curvus (strain 525.92).